Consider the following 360-residue polypeptide: GTPase Obg (360 aa).

The Obg domain occupies 1–156 (MFVDSVEIII…KCVRLELKLI (156 aa)). The OBG-type G domain occupies 157 to 360 (ADIGLVGFPN…LKFVLLEALP (204 aa)). Residues 163–170 (GFPNAGKS), 188–192 (FTTLV), 210–213 (DIPG), 279–282 (NKCD), and 341–343 (SAV) each bind GTP. Mg(2+) is bound by residues S170 and T190.

The protein belongs to the TRAFAC class OBG-HflX-like GTPase superfamily. OBG GTPase family. As to quaternary structure, monomer. Requires Mg(2+) as cofactor.

It localises to the cytoplasm. Functionally, an essential GTPase which binds GTP, GDP and possibly (p)ppGpp with moderate affinity, with high nucleotide exchange rates and a fairly low GTP hydrolysis rate. Plays a role in control of the cell cycle, stress response, ribosome biogenesis and in those bacteria that undergo differentiation, in morphogenesis control. This is GTPase Obg from Helicobacter pylori (strain HPAG1).